Here is a 157-residue protein sequence, read N- to C-terminus: Protein Smg (157 aa).

This sequence belongs to the Smg family.

The polypeptide is Protein Smg (Salmonella agona (strain SL483)).